The following is a 327-amino-acid chain: 2-methoxy-6-polyprenyl-1,4-benzoquinol methylase, mitochondrial (327 aa).

The transit peptide at 1 to 49 (MAAPRCCVLWRVCGRGWWRATGHCRLPGCHRSWPWATLGTRSLSQEKRA) directs the protein to the mitochondrion. Residues threonine 117, aspartate 171, and 199–200 (DA) contribute to the S-adenosyl-L-methionine site.

It belongs to the class I-like SAM-binding methyltransferase superfamily. MenG/UbiE family. In terms of assembly, component of a multi-subunit COQ enzyme complex, composed of at least COQ3, COQ4, COQ5, COQ6, COQ7 and COQ9. Interacts with PYURF; the interaction is direct, stabilizes COQ5 protein and associates PYURF with COQ enzyme complex.

The protein localises to the mitochondrion inner membrane. It carries out the reaction 2-methoxy-6-(all-trans-decaprenyl)benzene-1,4-diol + S-adenosyl-L-methionine = 5-methoxy-2-methyl-3-(all-trans-decaprenyl)benzene-1,4-diol + S-adenosyl-L-homocysteine + H(+). The protein operates within cofactor biosynthesis; ubiquinone biosynthesis. In terms of biological role, methyltransferase required for the conversion of 2-decaprenyl-6-methoxy-1,4-benzoquinol (DDMQH2) to 2-decaprenyl-3-methyl-6-methoxy-1,4-benzoquinol (DMQH2). The protein is 2-methoxy-6-polyprenyl-1,4-benzoquinol methylase, mitochondrial of Mus musculus (Mouse).